Reading from the N-terminus, the 304-residue chain is Glycine--tRNA ligase alpha subunit (304 aa).

The protein belongs to the class-II aminoacyl-tRNA synthetase family. As to quaternary structure, tetramer of two alpha and two beta subunits.

The protein localises to the cytoplasm. It catalyses the reaction tRNA(Gly) + glycine + ATP = glycyl-tRNA(Gly) + AMP + diphosphate. This chain is Glycine--tRNA ligase alpha subunit, found in Pectobacterium atrosepticum (strain SCRI 1043 / ATCC BAA-672) (Erwinia carotovora subsp. atroseptica).